We begin with the raw amino-acid sequence, 244 residues long: Krueppel-like factor 9 (244 aa).

Disordered stretches follow at residues 26-51 (EHGG…GDPG) and 79-143 (PSVC…EKRH). A compositionally biased stretch (basic and acidic residues) spans 32–51 (EAERLRLPEREVTKEHGDPG). At Ser-122 the chain carries Phosphoserine. A compositionally biased stretch (basic residues) spans 134-143 (KGKHASEKRH). C2H2-type zinc fingers lie at residues 143 to 167 (HKCP…YRVH), 173 to 197 (FPCT…YRTH), and 203 to 225 (FRCP…ARRH).

This sequence belongs to the Sp1 C2H2-type zinc-finger protein family. Interacts with ZZEF1.

Its subcellular location is the nucleus. Transcription factor that binds to GC box promoter elements. Selectively activates mRNA synthesis from genes containing tandem repeats of GC boxes but represses genes with a single GC box. Acts as an epidermal circadian transcription factor regulating keratinocyte proliferation. The chain is Krueppel-like factor 9 (Klf9) from Mus musculus (Mouse).